Consider the following 337-residue polypeptide: tRNA N6-adenosine threonylcarbamoyltransferase (337 aa).

Fe cation is bound by residues His110 and His114. Residues 133–137 (MVSGG), Asp166, Gly179, Asp183, and Asn276 each bind substrate. Asp302 is a Fe cation binding site.

The protein belongs to the KAE1 / TsaD family. It depends on Fe(2+) as a cofactor.

Its subcellular location is the cytoplasm. The enzyme catalyses L-threonylcarbamoyladenylate + adenosine(37) in tRNA = N(6)-L-threonylcarbamoyladenosine(37) in tRNA + AMP + H(+). Required for the formation of a threonylcarbamoyl group on adenosine at position 37 (t(6)A37) in tRNAs that read codons beginning with adenine. Is involved in the transfer of the threonylcarbamoyl moiety of threonylcarbamoyl-AMP (TC-AMP) to the N6 group of A37, together with TsaE and TsaB. TsaD likely plays a direct catalytic role in this reaction. The polypeptide is tRNA N6-adenosine threonylcarbamoyltransferase (Fervidobacterium nodosum (strain ATCC 35602 / DSM 5306 / Rt17-B1)).